Consider the following 212-residue polypeptide: Urease accessory protein UreG (212 aa).

11 to 18 (GPVGSGKT) serves as a coordination point for GTP.

The protein belongs to the SIMIBI class G3E GTPase family. UreG subfamily. As to quaternary structure, homodimer. UreD, UreF and UreG form a complex that acts as a GTP-hydrolysis-dependent molecular chaperone, activating the urease apoprotein by helping to assemble the nickel containing metallocenter of UreC. The UreE protein probably delivers the nickel.

Its subcellular location is the cytoplasm. Functionally, facilitates the functional incorporation of the urease nickel metallocenter. This process requires GTP hydrolysis, probably effectuated by UreG. The protein is Urease accessory protein UreG of Trichodesmium erythraeum (strain IMS101).